The primary structure comprises 492 residues: UTP--glucose-1-phosphate uridylyltransferase (492 aa).

UTP-binding positions include 110–113 (LNGG), Lys124, Gln183, and Gly210. 112–113 (GG) is a substrate binding site. Lys124 is a binding site for Mg(2+). Substrate contacts are provided by residues His211 and 239-241 (NID). Asp241 and Lys379 together coordinate UTP. Asp241 is a Mg(2+) binding site. Lys379 is a catalytic residue. The segment at 441–492 (VLTVSGNVLFGKNVVLKGTVIILADEKSKICVPDGSVLEDNIIYGNLPIIDH) is oligomerization.

Belongs to the UDPGP type 1 family. As to quaternary structure, homooctamer.

It carries out the reaction alpha-D-glucose 1-phosphate + UTP + H(+) = UDP-alpha-D-glucose + diphosphate. Functionally, plays a central role as a glucosyl donor in cellular metabolic pathways. The chain is UTP--glucose-1-phosphate uridylyltransferase (UGP1) from Encephalitozoon cuniculi (strain GB-M1) (Microsporidian parasite).